Consider the following 2196-residue polypeptide: Non-reducing polyketide synthase CTB1 (2196 aa).

Residues 11–250 (AFGDQTYDCS…TRLPITAPYH (240 aa)) form an N-terminal acylcarrier protein transacylase domain (SAT) region. Positions 381–814 (KSPIAILAAS…GGNTCLVLED (434 aa)) constitute a Ketosynthase family 3 (KS3) domain. Residues C553, H688, and H733 each act as for beta-ketoacyl synthase activity in the active site. Residues 922–1223 (AFTGQGSAFA…QTFASINKDK (302 aa)) form a malonyl-CoA:ACP transacylase (MAT) domain region. The interval 1298–1611 (SSSIHKVITN…VPKRLMHYIV (314 aa)) is product template (PT) domain. The tract at residues 1302-1441 (HKVITNTITA…EKTALKSAAL (140 aa)) is N-terminal hotdog fold. The PKS/mFAS DH domain maps to 1302-1608 (HKVITNTITA…LQGVPKRLMH (307 aa)). H1335 (proton acceptor; for dehydratase activity) is an active-site residue. The tract at residues 1460–1608 (TYRFSKGMIY…LQGVPKRLMH (149 aa)) is C-terminal hotdog fold. Catalysis depends on D1520, which acts as the Proton donor; for dehydratase activity. Positions 1617–1666 (KASGPPTEKKTSSPPVEKKASAPVAPTRPAIQRKNASIPPPATQVTPQNK) are disordered. Residues 1623-1636 (TEKKTSSPPVEKKA) show a composition bias toward basic and acidic residues. Carrier domains lie at 1671–1748 (PSVS…TRLS) and 1775–1857 (DPSP…SGST). O-(pantetheine 4'-phosphoryl)serine occurs at positions 1708 and 1816. Over residues 1856–1867 (STESFDSTTTKP) the composition is skewed to polar residues. The interval 1856 to 1923 (STESFDSTTT…PPKGRIPPAW (68 aa)) is disordered. The segment covering 1872–1887 (ATPPLTDSSASSPPSS) has biased composition (low complexity). The segment at 1937–2187 (ILFLFPDGAG…SGAQMLVEHM (251 aa)) is thioesterase (TE) domain.

Requires pantetheine 4'-phosphate as cofactor.

It catalyses the reaction 6 malonyl-CoA + acetyl-CoA + 6 H(+) = nor-toralactone + 6 CO2 + 7 CoA + 2 H2O. Its pathway is mycotoxin biosynthesis. Its function is as follows. Polyketide synthase; part of the gene cluster that mediates the biosynthesis of cercosporin, a light-activated, non-host-selective toxin. The perylenequinone chromophore of cercosporin absorbs light energy to attain an electronically-activated triplet state and produces active oxygen species such as the hydroxyl radical, superoxide, hydrogen peroxide or singlet oxygen upon reaction with oxygen molecules. These reactive oxygen species cause damage to various cellular components including lipids, proteins and nucleic acids. The first step of cercosporin biosynthesis is performed by the polyketide synthase CTB1 which catalyzes the formation of nor-toralactone. The starter unit acyltransferase (SAT) domain of CTB1 initiates polyketide extension by the selective utilization of acetyl-CoA, which is elongated to the heptaketide in the beta-ketoacyl synthase (KS) domain by successive condensations with six malonyl units introduced by the malonyl acyltransferase (MAT) domain. The product template (PT) domain catalyzes C4-C9 and C2-C11 aldol cyclizations and dehydrations to a trihydroxynaphthalene, which is thought to be delivered to the thioesterase (TE) domain for product release. The bifunctional enzyme CTB3 then methylates nor-toralactone to toralactone before conducting an unusual oxidative aromatic ring opening. The O-methyltransferase CTB2 further methylates the nascent OH-6 of the CBT3 product, blocking further oxidation at this site before the reductase CTB6 reduces the 2-oxopropyl ketone at position C7, giving naphthalene. The FAD-dependent monooxygenase CTB5 in concert with the multicopper oxidase CTB12 are responsible for homodimerization of naphthalene with CTB7 installing the dioxepine moiety, finally producing cercosporin. The fasciclin domain-containing protein CTB11 might act with CTB5 and CTB12 whereas the roles of CTB9 and CTB10 have still to be elucidated. This is Non-reducing polyketide synthase CTB1 from Cercospora nicotianae (Barn spot disease fungus).